Consider the following 172-residue polypeptide: RNA silencing suppressor p19 (172 aa).

2 stretches are compositionally biased toward basic and acidic residues: residues 1 to 14 (MERA…REQA) and 150 to 172 (SERE…EESE). Disordered stretches follow at residues 1–34 (MERA…KLPD) and 145–172 (LQPT…EESE).

Belongs to the tombusvirus protein p19 family. In terms of assembly, homodimer.

Its function is as follows. Viral suppressor of RNA silencing which binds specifically to silencing RNAs (siRNAs). Acts as a molecular caliper to specifically select siRNAs based on the length of the duplex region of the RNA. This Cymbidium ringspot virus (CymRSV) protein is RNA silencing suppressor p19.